The chain runs to 509 residues: DNA primase DnaG (509 aa).

One can recognise a Toprim domain in the interval aspartate 167 to valine 253. Residues glutamate 173, aspartate 215, and aspartate 217 each contribute to the Mg(2+) site. The interval lysine 267–leucine 411 is disordered. Composition is skewed to low complexity over residues proline 313–alanine 331 and glutamate 383–alanine 402.

The protein belongs to the archaeal DnaG primase family. In terms of assembly, forms a ternary complex with MCM helicase and DNA. Mg(2+) serves as cofactor.

It carries out the reaction ssDNA + n NTP = ssDNA/pppN(pN)n-1 hybrid + (n-1) diphosphate.. RNA polymerase that catalyzes the synthesis of short RNA molecules used as primers for DNA polymerase during DNA replication. This Natronomonas pharaonis (strain ATCC 35678 / DSM 2160 / CIP 103997 / JCM 8858 / NBRC 14720 / NCIMB 2260 / Gabara) (Halobacterium pharaonis) protein is DNA primase DnaG.